The primary structure comprises 123 residues: Putative acidic leucine-rich nuclear phosphoprotein 32 family member C (123 aa).

4 LRR repeats span residues 43-64, 65-87, 89-110, and 114-123; these read ELEF…PKLN, KLKK…AEKC, NLKH…ELLK, and NLKSLDLFNC.

Belongs to the ANP32 family.

In Mus musculus (Mouse), this protein is Putative acidic leucine-rich nuclear phosphoprotein 32 family member C (Anp32c).